Consider the following 191-residue polypeptide: Orotate phosphoribosyltransferase (191 aa).

114–122 (EDVVTTGKS) provides a ligand contact to 5-phospho-alpha-D-ribose 1-diphosphate. The orotate site is built by Thr-118 and Arg-146.

This sequence belongs to the purine/pyrimidine phosphoribosyltransferase family. PyrE subfamily. As to quaternary structure, homodimer. Mg(2+) serves as cofactor.

The enzyme catalyses orotidine 5'-phosphate + diphosphate = orotate + 5-phospho-alpha-D-ribose 1-diphosphate. It functions in the pathway pyrimidine metabolism; UMP biosynthesis via de novo pathway; UMP from orotate: step 1/2. Its function is as follows. Catalyzes the transfer of a ribosyl phosphate group from 5-phosphoribose 1-diphosphate to orotate, leading to the formation of orotidine monophosphate (OMP). In Clostridium botulinum (strain Loch Maree / Type A3), this protein is Orotate phosphoribosyltransferase.